The primary structure comprises 517 residues: Maturase K (517 aa).

This sequence belongs to the intron maturase 2 family. MatK subfamily.

The protein localises to the plastid. It localises to the chloroplast. Its function is as follows. Usually encoded in the trnK tRNA gene intron. Probably assists in splicing its own and other chloroplast group II introns. The polypeptide is Maturase K (Veronica arvensis (Wall speedwell)).